The sequence spans 579 residues: Probable cytochrome c oxidase subunit 1-alpha (579 aa).

Residues 1-21 form a disordered region; the sequence is MSILNEPQGAAAAEDSYENEL. A helical transmembrane segment spans residues 44–64; sequence IGTLYLVTSFAFFCIGGVMAL. Residue His-90 coordinates Fe(II)-heme a. 6 helical membrane passes run 93-113, 125-145, 174-194, 217-237, 262-282, and 295-315; these read IMLLMFATPLFAGFANWIMPL, LNMFAYWLYLFGSLIAVGGFL, MWIMGLAFSGFGTILGSVNFI, VLLTGVLVLLAFPVLAAALFA, LFWFFGHPEVYIIALPFFGII, and FGYMGLIGATIAIAGLSVTVW. Positions 268 and 272 each coordinate Cu cation. A cross-link (1'-histidyl-3'-tyrosine (His-Tyr)) is located at residues 268-272; that stretch reads HPEVY. The Cu cation site is built by His-317 and His-318. Helical transmembrane passes span 319 to 339, 363 to 383, 397 to 417, 437 to 457, and 480 to 500; these read MYVTGGVLLPFFSFMTFLIAV, MLWATGFLITFTFGGLTGVIL, FVVAHFHYVVFGTVVFAMFSG, ITFWTLFVGFHGTFLIQHWLG, and ISTICSFLLGLSILPFLYNVW. His-401 is a heme a3 binding site. His-403 serves as a coordination point for Fe(II)-heme a.

Belongs to the heme-copper respiratory oxidase family. As to quaternary structure, associates with subunits II, III and IV to form cytochrome c oxidase. Cu(2+) is required as a cofactor. The cofactor is heme.

Its subcellular location is the cell membrane. The catalysed reaction is 4 Fe(II)-[cytochrome c] + O2 + 8 H(+)(in) = 4 Fe(III)-[cytochrome c] + 2 H2O + 4 H(+)(out). The protein operates within energy metabolism; oxidative phosphorylation. Cytochrome c oxidase is the component of the respiratory chain that catalyzes the reduction of oxygen to water. Subunits 1-3 form the functional core of the enzyme complex. CO I is the catalytic subunit of the enzyme. Electrons originating in cytochrome c are transferred via the copper A center of subunit 2 and heme A of subunit 1 to the bimetallic center formed by heme A3 and copper B. This is Probable cytochrome c oxidase subunit 1-alpha (ctaD1) from Streptomyces avermitilis (strain ATCC 31267 / DSM 46492 / JCM 5070 / NBRC 14893 / NCIMB 12804 / NRRL 8165 / MA-4680).